A 114-amino-acid chain; its full sequence is Putative membrane protein insertion efficiency factor (114 aa).

Belongs to the UPF0161 family.

The protein resides in the cell inner membrane. Functionally, could be involved in insertion of integral membrane proteins into the membrane. The polypeptide is Putative membrane protein insertion efficiency factor (Nitrobacter hamburgensis (strain DSM 10229 / NCIMB 13809 / X14)).